Consider the following 162-residue polypeptide: Caveolin-2 (162 aa).

Topologically, residues 1 to 86 are cytoplasmic; sequence MGLETEKADV…FEISKYVIYK (86 aa). At tyrosine 19 the chain carries Phosphotyrosine; by SRC. Serine 20 and serine 23 each carry phosphoserine. Tyrosine 27 bears the Phosphotyrosine; by SRC mark. Serine 36 carries the phosphoserine modification. An intramembrane region (helical) is located at residues 87–107; sequence FLTVFLAIPLAFIAGILFATL. Over 108–162 the chain is Cytoplasmic; sequence SCLHIWILMPFVKTCLMVLPSVQTIWKSVTDVVIGPLCTSVGRIFSSVSMQLSHD.

The protein belongs to the caveolin family. Monomer or homodimer. Interacts with CAV1; the interaction forms a stable heterooligomeric complex that is required for targeting to lipid rafts and for caveolae formation. Tyrosine phosphorylated forms do not form heterooligomers with the Tyr-19-phosphorylated form existing as a monomer or dimer and the Tyr-27-form as a monomer only. Interacts (tyrosine phosphorylated form) with the SH2 domain-containing proteins, RASA1, NCK1 and SRC. Interacts (tyrosine phosphorylated form) with INSR; the interaction (Tyr-27-phosphorylated form) is increased on insulin stimulation. Interacts (Tyr-19-phosphorylated form) with MAPK1 (phosphorylated form); the interaction, promoted by insulin, leads to nuclear location and MAPK1 activation. Interacts with STAT3; the interaction is increased on insulin-induced tyrosine phosphorylation leading to STAT activation. In terms of processing, phosphorylated on serine and tyrosine residues. CAV1 promotes phosphorylation on Ser-23 which targets the complex to the plasma membrane, lipid rafts and caveolae. Phosphorylation on Ser-36 appears to modulate mitosis in endothelial cells. Phosphorylation on both Tyr-19 and Tyr-27 is required for insulin-induced 'Ser-727' phosphorylation of STAT3 and its activation. Phosphorylation on Tyr-19 is required for insulin-induced phosphorylation of MAPK1 and DNA binding of STAT3. Tyrosine phosphorylation is induced by both EGF and insulin. As to expression, in the retina, mainly expressed in vessels, but also diffuse expression in the inner and outer plexiform layers and in the inner nuclear layer.

The protein localises to the nucleus. It is found in the cytoplasm. Its subcellular location is the golgi apparatus membrane. The protein resides in the cell membrane. It localises to the membrane. The protein localises to the caveola. In terms of biological role, may act as a scaffolding protein within caveolar membranes. Interacts directly with G-protein alpha subunits and can functionally regulate their activity. Acts as an accessory protein in conjunction with CAV1 in targeting to lipid rafts and driving caveolae formation. The Ser-36 phosphorylated form has a role in modulating mitosis in endothelial cells. Positive regulator of cellular mitogenesis of the MAPK signaling pathway. Required for the insulin-stimulated nuclear translocation and activation of MAPK1 and STAT3, and the subsequent regulation of cell cycle progression. In Rattus norvegicus (Rat), this protein is Caveolin-2 (Cav2).